The chain runs to 235 residues: Thiamine import ATP-binding protein ThiQ (235 aa).

The ABC transporter domain maps to 2 to 230; sequence LKLIDITWLY…QASASALLGI (229 aa). 32 to 39 contacts ATP; that stretch reads GPSGAGKS.

Belongs to the ABC transporter superfamily. Thiamine importer (TC 3.A.1.19.1) family. The complex is composed of two ATP-binding proteins (ThiQ), two transmembrane proteins (ThiP) and a solute-binding protein (ThiB).

It is found in the cell inner membrane. The enzyme catalyses thiamine(out) + ATP + H2O = thiamine(in) + ADP + phosphate + H(+). Its function is as follows. Part of the ABC transporter complex ThiBPQ involved in thiamine import. Responsible for energy coupling to the transport system. The sequence is that of Thiamine import ATP-binding protein ThiQ from Salmonella choleraesuis (strain SC-B67).